A 66-amino-acid polypeptide reads, in one-letter code: UPF0434 protein M446_0487 (66 aa).

Belongs to the UPF0434 family.

The polypeptide is UPF0434 protein M446_0487 (Methylobacterium sp. (strain 4-46)).